The sequence spans 575 residues: Lysine--tRNA ligase (575 aa).

2 residues coordinate Mg(2+): Glu412 and Glu419.

It belongs to the class-II aminoacyl-tRNA synthetase family. In terms of assembly, homodimer. Mg(2+) is required as a cofactor.

It is found in the cytoplasm. It catalyses the reaction tRNA(Lys) + L-lysine + ATP = L-lysyl-tRNA(Lys) + AMP + diphosphate. In Bacteroides fragilis (strain YCH46), this protein is Lysine--tRNA ligase.